We begin with the raw amino-acid sequence, 409 residues long: Elongation factor Tu (409 aa).

A tr-type G domain is found at 10 to 214; the sequence is KPHVNIGTIG…AVDDNIPEPE (205 aa). The segment at 19-26 is G1; sequence GHVDHGKT. 19-26 provides a ligand contact to GTP; it reads GHVDHGKT. Thr26 serves as a coordination point for Mg(2+). The interval 60-64 is G2; the sequence is GITIN. The tract at residues 81–84 is G3; the sequence is DCPG. Residues 81 to 85 and 136 to 139 each bind GTP; these read DCPGH and NKKD. Residues 136–139 form a G4 region; sequence NKKD. The segment at 174–176 is G5; the sequence is SAL.

Belongs to the TRAFAC class translation factor GTPase superfamily. Classic translation factor GTPase family. EF-Tu/EF-1A subfamily. Monomer.

It localises to the cytoplasm. The enzyme catalyses GTP + H2O = GDP + phosphate + H(+). In terms of biological role, GTP hydrolase that promotes the GTP-dependent binding of aminoacyl-tRNA to the A-site of ribosomes during protein biosynthesis. The chain is Elongation factor Tu from Crocosphaera subtropica (strain ATCC 51142 / BH68) (Cyanothece sp. (strain ATCC 51142)).